The chain runs to 783 residues: BMP/retinoic acid-inducible neural-specific protein 2 (783 aa).

The N-terminal stretch at 1-33 is a signal peptide; sequence MRWQCGTRFRGLRPAVAPWTALLALGLPGWVLA. The region spanning 85-281 is the MACPF domain; it reads RYRIYREFAR…FVAAALSYIT (197 aa). Asn-185, Asn-354, Asn-473, Asn-579, Asn-626, and Asn-658 each carry an N-linked (GlcNAc...) asparagine glycan.

Belongs to the BRINP family.

It localises to the secreted. Functionally, inhibits neuronal cell proliferation by negative regulation of the cell cycle transition. This chain is BMP/retinoic acid-inducible neural-specific protein 2 (BRINP2), found in Homo sapiens (Human).